Here is a 91-residue protein sequence, read N- to C-terminus: Small ribosomal subunit protein uS19 (91 aa).

This sequence belongs to the universal ribosomal protein uS19 family.

Protein S19 forms a complex with S13 that binds strongly to the 16S ribosomal RNA. The polypeptide is Small ribosomal subunit protein uS19 (rpsS) (Mycoplasmopsis pulmonis (strain UAB CTIP) (Mycoplasma pulmonis)).